A 247-amino-acid chain; its full sequence is Oocyte zinc finger protein XlCOF20 (247 aa).

C2H2-type zinc fingers lie at residues 6-28, 34-56, 62-84, 90-112, 118-140, 146-168, 174-196, and 225-247; these read YDCR…QRVH, FPCT…QRVH, FICS…LRVH, FVCT…QRVH, FTCT…LRVH, FVCT…LRVH, FMCA…QRIC, and QSCA…MRVH.

The protein belongs to the krueppel C2H2-type zinc-finger protein family.

It localises to the nucleus. Functionally, may be involved in transcriptional regulation. This Xenopus laevis (African clawed frog) protein is Oocyte zinc finger protein XlCOF20.